The primary structure comprises 320 residues: Arginine/serine-rich protein 1 (320 aa).

Positions 1 to 22 (MKTEASPGRLHEDVKLIFDKKA) are enriched in basic and acidic residues. Disordered regions lie at residues 1–180 (MKTE…SRER) and 215–299 (LKEM…ADIV). 2 stretches are compositionally biased toward low complexity: residues 24 to 48 (SGRSSSCSSSSSSSSGSSYSSSRGS) and 56 to 74 (TSSSSRSSSSGSSSSSNSR). 3 stretches are compositionally biased toward basic residues: residues 75-102 (SRSRPRCSGRVHCRHRHRSPPRRYRARS), 114-158 (RRRH…RYRC), and 166-175 (RSPRPYRSRS). Phosphoserine is present on residues serine 135 and serine 137. Residues 215 to 238 (LKEMEQQEERKRRSSSDEEERVRV) are compositionally biased toward basic and acidic residues. Residues 271–293 (VFSNNNAIAKPSSSPTLSDSKVT) show a composition bias toward polar residues.

It belongs to the RSRP family. Post-translationally, phosphorylated. Phosphorylation at Ser-135 and Ser-137 mediates the interaction with spliceosome proteins.

It localises to the nucleus. Probably acts as a spliceosomal factor that contributes to spliceosome assembly and regulates the isoform switching of proteins such as PARP6. This Danio rerio (Zebrafish) protein is Arginine/serine-rich protein 1 (rsrp1).